A 748-amino-acid polypeptide reads, in one-letter code: Putative transmembrane protein ORF88 (748 aa).

A signal peptide spans 1-20; that stretch reads MIIMKSIILLLAWFLTKTQA. Topologically, residues 21–723 are extracellular; it reads NMLTESLYLS…LNLAPFKTLS (703 aa). N-linked (GlcNAc...) asparagine; by host glycans are attached at residues Asn-55, Asn-78, Asn-99, Asn-152, Asn-189, Asn-390, Asn-467, and Asn-499. Residues 531–574 form a disordered region; sequence LTFDSPPPPPTTTQAPPPPPTTTQAPPPPPTTTQAPPPPIVINT. Positions 535–570 are enriched in pro residues; it reads SPPPPPTTTQAPPPPPTTTQAPPPPPTTTQAPPPPI. N-linked (GlcNAc...) asparagine; by host glycans are attached at residues Asn-573, Asn-584, Asn-599, Asn-612, and Asn-617. The disordered stretch occupies residues 650–680; sequence PSIGRAPIPPPDVPVEPPRSIPTTNAPSPEE. A compositionally biased stretch (pro residues) spans 656–669; the sequence is PIPPPDVPVEPPRS. A helical transmembrane segment spans residues 724–744; it reads YAGIGVVSFALLFTILVVCLI. At 745–748 the chain is on the cytoplasmic side; sequence KFSI.

Its subcellular location is the host membrane. The chain is Putative transmembrane protein ORF88 from Magallana gigas (Pacific oyster).